The following is a 211-amino-acid chain: Large ribosomal subunit protein bL25 (211 aa).

The interval 188 to 211 (HREEEKAPEETGEAAPAPTPETGQ) is disordered. The span at 200–211 (EAAPAPTPETGQ) shows a compositional bias: low complexity.

Belongs to the bacterial ribosomal protein bL25 family. CTC subfamily. In terms of assembly, part of the 50S ribosomal subunit; part of the 5S rRNA/L5/L18/L25 subcomplex. Contacts the 5S rRNA. Binds to the 5S rRNA independently of L5 and L18.

This is one of the proteins that binds to the 5S RNA in the ribosome where it forms part of the central protuberance. The polypeptide is Large ribosomal subunit protein bL25 (Desulforudis audaxviator (strain MP104C)).